The primary structure comprises 810 residues: Phenylalanine--tRNA ligase beta subunit (810 aa).

Residues 39–150 (RTWANGVVVG…ENLPLGSDVR (112 aa)) form the tRNA-binding domain. A B5 domain is found at 411–495 (TWSRSIFLRL…RLYGYDNFCD (85 aa)). Residues Asp473, Asp479, Glu482, and Glu483 each contribute to the Mg(2+) site. Residues 716-809 (STYPASDRDI…LVEKFGVNLR (94 aa)) form the FDX-ACB domain.

Belongs to the phenylalanyl-tRNA synthetase beta subunit family. Type 1 subfamily. As to quaternary structure, tetramer of two alpha and two beta subunits. Mg(2+) is required as a cofactor.

Its subcellular location is the cytoplasm. The catalysed reaction is tRNA(Phe) + L-phenylalanine + ATP = L-phenylalanyl-tRNA(Phe) + AMP + diphosphate + H(+). This Trichormus variabilis (strain ATCC 29413 / PCC 7937) (Anabaena variabilis) protein is Phenylalanine--tRNA ligase beta subunit.